A 388-amino-acid chain; its full sequence is Basigin (388 aa).

The first 22 residues, 1 to 22, serve as a signal peptide directing secretion; that stretch reads MAAALLLALAFTFLSGQGACAA. Topologically, residues 23 to 326 are extracellular; sequence AGFLKAPMSQ…ISLRVRSRLA (304 aa). Positions 37–120 constitute an Ig-like domain; it reads GGSVVLHCEA…SSDPDRNHLT (84 aa). Disulfide bonds link C44-C108, C157-C203, and C242-C304. Residues 138–219 enclose the Ig-like C2-type domain; the sequence is EPGTIVTSVQ…VGRGNINVEG (82 aa). N160, N269, and N305 each carry an N-linked (GlcNAc...) asparagine glycan. The region spanning 221-320 is the Ig-like V-type domain; the sequence is PRIKVGKKSE…GSARETISLR (100 aa). Residues 327–347 form a helical membrane-spanning segment; that stretch reads ALWPFLGIVAEVLVLVTIIFI. The Cytoplasmic portion of the chain corresponds to 348–388; that stretch reads YEKRRKPDQTLDEDDPGAAPLKGSGSHLNDKDKNVRQRNAT. Residues 355-388 are disordered; it reads DQTLDEDDPGAAPLKGSGSHLNDKDKNVRQRNAT. T357 carries the phosphothreonine modification. S371 is modified (phosphoserine).

Homooligomer. Interacts with NXNL1, SLC2A1 and SLC16A1/GLUT1. Interacts with XKR8; promoting its localization at the cell membrane. In terms of assembly, homooligomer. Interacts with SLC16A1; interaction mediates SLC16A1 targeting to the plasma membrane. Interacts with SLC16A3; interaction mediates SLC16A3 targeting to the plasma membrane. Interacts with VEGFA, KDR/VEGFR2, PPIA/CYPA, SLC16A12, SLC16A11, ATP1B2, MAG, L1CAM and AJAP1. Interacts with PPIL2; regulates BSG transport to the cell membrane. As to quaternary structure, interacts with SLC16A6; this interaction mediates targeting to the plasma membrane. Expressed in the skeletal muscle, liver, small intestine, kidney, testis, brain, heart and spleen. Also present in various immature cells and endothelia.

Its subcellular location is the cell membrane. It localises to the photoreceptor inner segment. The protein localises to the cell projection. It is found in the cilium. The protein resides in the photoreceptor outer segment. Its subcellular location is the endoplasmic reticulum membrane. It localises to the basolateral cell membrane. Functionally, essential for normal retinal maturation and development. Acts as a retinal cell surface receptor for NXNL1 and plays an important role in NXNL1-mediated survival of retinal cone photoreceptors. In association with glucose transporter SLC16A1/GLUT1 and NXNL1, promotes retinal cone survival by enhancing aerobic glycolysis and accelerating the entry of glucose into photoreceptors. In terms of biological role, signaling receptor for cyclophilins, essential for PPIA/CYPA and PPIB/CYPB-dependent signaling related to chemotaxis and adhesion of immune cells. Plays an important role in targeting the monocarboxylate transporters SLC16A1/GLUT1 and SLC16A3 to the plasma membrane. Acts as a coreceptor for vascular endothelial growth factor receptor 2 (KDR/VEGFR2) in endothelial cells enhancing its VEGFA-mediated activation and downstream signaling. Promotes angiogenesis through EPAS1/HIF2A-mediated up-regulation of VEGFA and KDR/VEGFR2 in endothelial cells. Plays an important role in spermatogenesis; mediates interactions between germ cells and Sertoli cell and is essential for the development/differentiation of germ cells to round spermatids. The protein is Basigin (Bsg) of Rattus norvegicus (Rat).